Reading from the N-terminus, the 443-residue chain is Exodeoxyribonuclease 7 large subunit (443 aa).

This sequence belongs to the XseA family. As to quaternary structure, heterooligomer composed of large and small subunits.

It is found in the cytoplasm. The catalysed reaction is Exonucleolytic cleavage in either 5'- to 3'- or 3'- to 5'-direction to yield nucleoside 5'-phosphates.. Bidirectionally degrades single-stranded DNA into large acid-insoluble oligonucleotides, which are then degraded further into small acid-soluble oligonucleotides. The protein is Exodeoxyribonuclease 7 large subunit of Legionella pneumophila (strain Paris).